We begin with the raw amino-acid sequence, 380 residues long: Queuine tRNA-ribosyltransferase (380 aa).

The active-site Proton acceptor is Asp-96. Substrate is bound by residues 96-100 (DSGGF), Asp-150, Gln-193, and Gly-220. The tract at residues 251–257 (GVGAPDS) is RNA binding. The active-site Nucleophile is Asp-270. An RNA binding; important for wobble base 34 recognition region spans residues 275–279 (TRIAR). Cys-308, Cys-310, Cys-313, and His-339 together coordinate Zn(2+).

The protein belongs to the queuine tRNA-ribosyltransferase family. Homodimer. Within each dimer, one monomer is responsible for RNA recognition and catalysis, while the other monomer binds to the replacement base PreQ1. Zn(2+) serves as cofactor.

The enzyme catalyses 7-aminomethyl-7-carbaguanine + guanosine(34) in tRNA = 7-aminomethyl-7-carbaguanosine(34) in tRNA + guanine. It participates in tRNA modification; tRNA-queuosine biosynthesis. Its function is as follows. Catalyzes the base-exchange of a guanine (G) residue with the queuine precursor 7-aminomethyl-7-deazaguanine (PreQ1) at position 34 (anticodon wobble position) in tRNAs with GU(N) anticodons (tRNA-Asp, -Asn, -His and -Tyr). Catalysis occurs through a double-displacement mechanism. The nucleophile active site attacks the C1' of nucleotide 34 to detach the guanine base from the RNA, forming a covalent enzyme-RNA intermediate. The proton acceptor active site deprotonates the incoming PreQ1, allowing a nucleophilic attack on the C1' of the ribose to form the product. After dissociation, two additional enzymatic reactions on the tRNA convert PreQ1 to queuine (Q), resulting in the hypermodified nucleoside queuosine (7-(((4,5-cis-dihydroxy-2-cyclopenten-1-yl)amino)methyl)-7-deazaguanosine). This Streptococcus mutans serotype c (strain ATCC 700610 / UA159) protein is Queuine tRNA-ribosyltransferase.